Here is a 150-residue protein sequence, read N- to C-terminus: Large ribosomal subunit protein bL9 (150 aa).

This sequence belongs to the bacterial ribosomal protein bL9 family.

In terms of biological role, binds to the 23S rRNA. The protein is Large ribosomal subunit protein bL9 of Mycoplasma genitalium (strain ATCC 33530 / DSM 19775 / NCTC 10195 / G37) (Mycoplasmoides genitalium).